The following is a 453-amino-acid chain: Keratin, type I cytoskeletal 15 (453 aa).

The segment at 1–102 is head; that stretch reads MATTLLQTSS…GGDGGLLSGN (102 aa). 5 positions are modified to phosphoserine: Ser-16, Ser-17, Ser-34, Ser-48, and Ser-56. The tract at residues 103–138 is coil 1A; sequence EKITMQNLNDRLASYLEKVRALEEANADLEVKIRDW. The IF rod domain occupies 103 to 415; sequence EKITMQNLND…SLLEGQDARM (313 aa). Residues 139-157 form a linker 1 region; the sequence is YQRQSPTSPERDYSPYFKT. Residues 158–249 form a coil 1B region; sequence TDELRDKILA…KNHEEEMKEF (92 aa). The segment at 250–269 is linker 12; that stretch reads SNQLAGQVNVEMDAAPGVDL. The coil 2 stretch occupies residues 270–411; that stretch reads TRVLSEMREQ…ATYHSLLEGQ (142 aa). Lys-298 is covalently cross-linked (Glycyl lysine isopeptide (Lys-Gly) (interchain with G-Cter in SUMO2)). Thr-299 and Thr-321 each carry phosphothreonine. The tail stretch occupies residues 412–453; the sequence is DARMAGIGTGEASLGGGGGGKVRINVEESVDGKVVSSRKREI. A Glycyl lysine isopeptide (Lys-Gly) (interchain with G-Cter in SUMO1); alternate cross-link involves residue Lys-444. Lys-444 participates in a covalent cross-link: Glycyl lysine isopeptide (Lys-Gly) (interchain with G-Cter in SUMO2); alternate.

It belongs to the intermediate filament family. In terms of assembly, heterotetramer of two type I and two type II keratins. Interacts with NOD2. In terms of tissue distribution, expressed in the basal cell layers of several stratified epithelia including esophagus, tongue, stomach, epidermis and hair follicle. In the hair follicle, expression is detected mainly in the basal layer of the outer root sheath (ORS), except just above the follicle bulb where it occurs throughout its thickness. Low expression levels are seen in the single layer of ORS cells around the base of the follicle which increases in the palisade-like cells of the bulb. Also expressed in the basal cells of the sebaceous glands, and expression in the epidermis occurs in a punctate pattern.

The polypeptide is Keratin, type I cytoskeletal 15 (Ovis aries (Sheep)).